The primary structure comprises 401 residues: Tumor necrosis factor receptor superfamily member 11B (401 aa).

A signal peptide spans 1 to 21; it reads MNKWLCCALLVFLDIIEWTTQ. TNFR-Cys repeat units follow at residues 24-62, 65-105, 107-142, and 145-185; these read FPPKYLHYDPETGRQLLCDKCAPGTYLKQHCTVRRKTLC, CPDY…NRVC, CEEGRYLELEFCLKHRSCPPGLGVLQAGTPERNTVC, and CPDG…DNVC. Disulfide bonds link C41/C54, C44/C62, C65/C80, C83/C97, C87/C105, C107/C118, C124/C142, and C145/C160. An N-linked (GlcNAc...) asparagine glycan is attached at N98. Residues N165 and N178 are each glycosylated (N-linked (GlcNAc...) asparagine). C166 and C185 are joined by a disulfide. 2 consecutive Death domains span residues 198–269 and 270–365; these read DVTL…MVKK and IIQD…THSL. Residue N289 is glycosylated (N-linked (GlcNAc...) asparagine).

As to quaternary structure, homodimer. Interacts with TNFSF10 and TNFSF11.

Its subcellular location is the secreted. Its function is as follows. Acts as a decoy receptor for TNFSF11/RANKL and thereby neutralizes its function in osteoclastogenesis. Inhibits the activation of osteoclasts and promotes osteoclast apoptosis in vitro. Bone homeostasis seems to depend on the local ratio between TNFSF11 and TNFRSF11B. May also play a role in preventing arterial calcification. May act as decoy receptor for TNFSF10/TRAIL and protect against apoptosis. TNFSF10/TRAIL binding blocks the inhibition of osteoclastogenesis. This is Tumor necrosis factor receptor superfamily member 11B (Tnfrsf11b) from Rattus norvegicus (Rat).